Consider the following 736-residue polypeptide: Catalase-peroxidase 2 (736 aa).

The N-terminal stretch at 1–23 (MIKKTLPVLILLALSGSFSTAVA) is a signal peptide. The segment at residues 102-223 (WHGAGTYRTY…LAATQMGLIY (122 aa)) is a cross-link (tryptophyl-tyrosyl-methioninium (Trp-Tyr) (with M-249)). The active-site Proton acceptor is His-103. The tryptophyl-tyrosyl-methioninium (Tyr-Met) (with W-102) cross-link spans 223-249 (YVNPEGPGGKPDPLASAKDIREAFSRM). His-264 contributes to the heme b binding site.

The protein belongs to the peroxidase family. Peroxidase/catalase subfamily. Homodimer or homotetramer. It depends on heme b as a cofactor. In terms of processing, formation of the three residue Trp-Tyr-Met cross-link is important for the catalase, but not the peroxidase activity of the enzyme.

The protein resides in the periplasm. The enzyme catalyses H2O2 + AH2 = A + 2 H2O. It catalyses the reaction 2 H2O2 = O2 + 2 H2O. Functionally, bifunctional enzyme with both catalase and broad-spectrum peroxidase activity. This chain is Catalase-peroxidase 2, found in Escherichia coli O157:H7.